A 146-amino-acid chain; its full sequence is Phospholipase A2 (146 aa).

The first 18 residues, 1 to 18, serve as a signal peptide directing secretion; the sequence is MAFLVFAFLTLMAVETYG. 7 cysteine pairs are disulfide-bonded: cysteine 44–cysteine 137, cysteine 46–cysteine 62, cysteine 61–cysteine 117, cysteine 67–cysteine 144, cysteine 68–cysteine 110, cysteine 77–cysteine 103, and cysteine 95–cysteine 108. Tyrosine 45, glycine 47, and glycine 49 together coordinate Ca(2+). Histidine 65 is an active-site residue. Aspartate 66 contributes to the Ca(2+) binding site. Asparagine 85 carries N-linked (GlcNAc...) asparagine glycosylation. Aspartate 111 is a catalytic residue. The N-linked (GlcNAc...) asparagine glycan is linked to asparagine 126.

Ca(2+) serves as cofactor. Post-translationally, N-glycosylated. Glycosylated with mannose chains including Man2(GlcNAc), Man2(GlcNAc)2, Man2(GlcNAc)3, Man2(GlcNAc)4 and Man2(GlcNAc)5. As to expression, expressed by the skin glands (at protein level).

It localises to the secreted. It catalyses the reaction a 1,2-diacyl-sn-glycero-3-phosphocholine + H2O = a 1-acyl-sn-glycero-3-phosphocholine + a fatty acid + H(+). Functionally, PLA2 catalyzes the calcium-dependent hydrolysis of the 2-acyl groups in 3-sn-phosphoglycerides. This Pithecopus azureus (Orange-legged monkey tree frog) protein is Phospholipase A2.